Here is an 805-residue protein sequence, read N- to C-terminus: Ubiquitin carboxyl-terminal hydrolase 5 (805 aa).

In terms of domain architecture, Rhodanese spans 159-283; it reads HGDALLLIDV…WVKLGGAYQS (125 aa). A disordered region spans residues 359–380; sequence RNSPTVQKFSPHPPTTLSKLNT. The USP domain maps to 446–804; the sequence is VGLENIGNCC…SAYVLFYERI (359 aa). Residue Cys455 is the Nucleophile of the active site. His761 acts as the Proton acceptor in catalysis.

Belongs to the peptidase C19 family.

It carries out the reaction Thiol-dependent hydrolysis of ester, thioester, amide, peptide and isopeptide bonds formed by the C-terminal Gly of ubiquitin (a 76-residue protein attached to proteins as an intracellular targeting signal).. The protein is Ubiquitin carboxyl-terminal hydrolase 5 (UBP5) of Saccharomyces cerevisiae (strain ATCC 204508 / S288c) (Baker's yeast).